We begin with the raw amino-acid sequence, 884 residues long: Valine--tRNA ligase (884 aa).

A 'HIGH' region motif is present at residues 46-56; sequence PNVTGKLHLGH. Residues 520–524 carry the 'KMSKS' region motif; it reads KMSKS. K523 contributes to the ATP binding site. Residues 809-844 are a coiled coil; the sequence is LADLLNVEEELARLEKELAKWQKELNMVGKKLSNER.

This sequence belongs to the class-I aminoacyl-tRNA synthetase family. ValS type 1 subfamily. In terms of assembly, monomer.

It is found in the cytoplasm. It carries out the reaction tRNA(Val) + L-valine + ATP = L-valyl-tRNA(Val) + AMP + diphosphate. Functionally, catalyzes the attachment of valine to tRNA(Val). As ValRS can inadvertently accommodate and process structurally similar amino acids such as threonine, to avoid such errors, it has a 'posttransfer' editing activity that hydrolyzes mischarged Thr-tRNA(Val) in a tRNA-dependent manner. The polypeptide is Valine--tRNA ligase (Streptococcus agalactiae serotype III (strain NEM316)).